The primary structure comprises 102 residues: Acid shock protein (102 aa).

The signal sequence occupies residues M1–A21. The segment covering A22–K41 has biased composition (low complexity). Positions A22–Q58 are excised as a propeptide. The interval A22–A102 is disordered. Residues A80–H90 show a composition bias toward basic residues. A compositionally biased stretch (low complexity) spans Q91–A102.

This sequence belongs to the Asr family. Proteolytic processing gives rise to the active protein.

The protein localises to the periplasm. Required for growth and/or survival at acidic conditions. The polypeptide is Acid shock protein (Escherichia coli O127:H6 (strain E2348/69 / EPEC)).